The following is a 444-amino-acid chain: Endoglucanase N (444 aa).

The first 31 residues, 1–31, serve as a signal peptide directing secretion; the sequence is MWMRRNQIVRKLTLGVVTTVLGMSLSFSALS. Substrate contacts are provided by residues histidine 64, 68-69, tyrosine 95, and histidine 130; that span reads WF. The active-site Proton donor is the glutamate 168. Tyrosine 230 is a binding site for substrate. Glutamate 256 serves as the catalytic Nucleophile. Substrate-binding positions include 262–263, tryptophan 290, and 295–297; these read AS and KSE. Positions 332–358 are disordered; that stretch reads ANLGGGDTPTTPTTPTEPTNPGNGTTG. The segment covering 339-358 has biased composition (low complexity); sequence TPTTPTTPTEPTNPGNGTTG. The CBM3 domain maps to 356–444; the sequence is TTGDVVLQYR…DKANRYVLVT (89 aa).

This sequence belongs to the glycosyl hydrolase 5 (cellulase A) family.

The protein resides in the secreted. The catalysed reaction is Endohydrolysis of (1-&gt;4)-beta-D-glucosidic linkages in cellulose, lichenin and cereal beta-D-glucans.. The polypeptide is Endoglucanase N (celN) (Pectobacterium atrosepticum (Erwinia carotovora subsp. atroseptica)).